A 336-amino-acid polypeptide reads, in one-letter code: tRNA N6-adenosine threonylcarbamoyltransferase (336 aa).

Residues His-114 and His-118 each coordinate Fe cation. Residues 136-140, Asp-169, Gly-182, Asp-186, and Asn-275 contribute to the substrate site; that span reads LVSGG. Position 301 (Asp-301) interacts with Fe cation.

Belongs to the KAE1 / TsaD family. Fe(2+) is required as a cofactor.

It is found in the cytoplasm. It carries out the reaction L-threonylcarbamoyladenylate + adenosine(37) in tRNA = N(6)-L-threonylcarbamoyladenosine(37) in tRNA + AMP + H(+). Functionally, required for the formation of a threonylcarbamoyl group on adenosine at position 37 (t(6)A37) in tRNAs that read codons beginning with adenine. Is involved in the transfer of the threonylcarbamoyl moiety of threonylcarbamoyl-AMP (TC-AMP) to the N6 group of A37, together with TsaE and TsaB. TsaD likely plays a direct catalytic role in this reaction. This is tRNA N6-adenosine threonylcarbamoyltransferase from Streptococcus gordonii (strain Challis / ATCC 35105 / BCRC 15272 / CH1 / DL1 / V288).